The following is a 249-amino-acid chain: MPFEIVFDGAKEFADLIATASNLIDEAAFKITEEGVSMRAMDPSRVVLIDLNLPESIFSKYEVEEPETIGINMDHFKKILKRGKSKDTLILRKGDENFLEITFEGTAKRTFRLPLIDVEELELELPELPFTAKVVLLGEVLKEAIKDASLVSDSLKFIAKEDEFTMKAEGETNEVEIKLTLEDEGLLDLEVEEETRSAYGISYLADMVKGIGKADEVTLRFGTEMPLQMDYFIRDEGKLTFLLAPRVEE.

This sequence belongs to the PCNA family. Homotrimer. The subunits circularize to form a toroid; DNA passes through its center. Replication factor C (RFC) is required to load the toroid on the DNA.

In terms of biological role, sliding clamp subunit that acts as a moving platform for DNA processing. Responsible for tethering the catalytic subunit of DNA polymerase and other proteins to DNA during high-speed replication. In Thermococcus gammatolerans (strain DSM 15229 / JCM 11827 / EJ3), this protein is DNA polymerase sliding clamp.